The primary structure comprises 181 residues: NADH-quinone oxidoreductase subunit I (181 aa).

2 consecutive 4Fe-4S ferredoxin-type domains span residues T52–S81 and E91–D120. 8 residues coordinate [4Fe-4S] cluster: C61, C64, C67, C71, C100, C103, C106, and C110.

Belongs to the complex I 23 kDa subunit family. In terms of assembly, NDH-1 is composed of 13 different subunits. Subunits NuoA, H, J, K, L, M, N constitute the membrane sector of the complex. [4Fe-4S] cluster is required as a cofactor.

Its subcellular location is the cell inner membrane. It catalyses the reaction a quinone + NADH + 5 H(+)(in) = a quinol + NAD(+) + 4 H(+)(out). NDH-1 shuttles electrons from NADH, via FMN and iron-sulfur (Fe-S) centers, to quinones in the respiratory chain. The immediate electron acceptor for the enzyme in this species is believed to be ubiquinone. Couples the redox reaction to proton translocation (for every two electrons transferred, four hydrogen ions are translocated across the cytoplasmic membrane), and thus conserves the redox energy in a proton gradient. The protein is NADH-quinone oxidoreductase subunit I of Blochmanniella floridana.